Consider the following 127-residue polypeptide: MEIFGNVVSGLGEGRFFVGLTPYKNKFEELTGFIPFEGTLNVKLKHNFNLDNFNPIEFDGFEINGKRYFGGKVLLIKLFNKHGNFVNCAIVAPKKTDHSKKTLEIIAPIQLRKFLSLNNSNVVKIVI.

Residue 10–15 (GLGEGR) participates in CDP binding. The Mg(2+) site is built by threonine 39 and asparagine 41. Residues threonine 96 and glutamate 104 each coordinate FMN. 109-112 (IQLR) contributes to the CDP binding site.

The protein belongs to the archaeal riboflavin kinase family. Requires Mg(2+) as cofactor.

It catalyses the reaction riboflavin + CTP = CDP + FMN + H(+). It functions in the pathway cofactor biosynthesis; FMN biosynthesis; FMN from riboflavin (CTP route): step 1/1. Its function is as follows. Catalyzes the CTP-dependent phosphorylation of riboflavin (vitamin B2) to form flavin mononucleotide (FMN). This chain is Riboflavin kinase, found in Methanococcus maripaludis (strain C5 / ATCC BAA-1333).